Consider the following 318-residue polypeptide: Ankyrin repeat and SOCS box protein 7 (318 aa).

ANK repeat units follow at residues 13–42, 46–75, 80–109, 116–145, 149–178, 180–208, and 213–242; these read QEEL…SPNG, NGWT…DPTV, GGFT…RSDI, DGWT…EVDP, KGTT…NIDI, NGFL…DTDL, and DGQT…DTNT. The 54-residue stretch at 265-318 folds into the SOCS box domain; the sequence is LDFLQEVTRQPRNLQDLCRIKIRQCIGLQNLKLLDELPIAKVMKDYLKHKFDDI.

The protein belongs to the ankyrin SOCS box (ASB) family. As to quaternary structure, interacts with CUL5. Interacts with RNF7. Interacts with PSRC1.

It participates in protein modification; protein ubiquitination. Its function is as follows. Probable substrate-recognition component of a SCF-like ECS (Elongin-Cullin-SOCS-box protein) E3 ubiquitin-protein ligase complex which mediates the ubiquitination and subsequent proteasomal degradation of target proteins. Plays a role in spindle dynamics and genome integrity by targeting the mitotic progression protein PSRC1 for proteasomal degradation in a cell cycle-dependent manner. Also participates in meiosis by mediating the proper attachment between kinetochores and microtubules. The sequence is that of Ankyrin repeat and SOCS box protein 7 (ASB7) from Macaca fascicularis (Crab-eating macaque).